A 240-amino-acid polypeptide reads, in one-letter code: 1-(5-phosphoribosyl)-5-[(5-phosphoribosylamino)methylideneamino] imidazole-4-carboxamide isomerase (240 aa).

Aspartate 10 serves as the catalytic Proton acceptor. Residue aspartate 132 is the Proton donor of the active site.

Belongs to the HisA/HisF family.

The protein resides in the cytoplasm. It catalyses the reaction 1-(5-phospho-beta-D-ribosyl)-5-[(5-phospho-beta-D-ribosylamino)methylideneamino]imidazole-4-carboxamide = 5-[(5-phospho-1-deoxy-D-ribulos-1-ylimino)methylamino]-1-(5-phospho-beta-D-ribosyl)imidazole-4-carboxamide. The protein operates within amino-acid biosynthesis; L-histidine biosynthesis; L-histidine from 5-phospho-alpha-D-ribose 1-diphosphate: step 4/9. This chain is 1-(5-phosphoribosyl)-5-[(5-phosphoribosylamino)methylideneamino] imidazole-4-carboxamide isomerase, found in Methanocella arvoryzae (strain DSM 22066 / NBRC 105507 / MRE50).